Here is a 336-residue protein sequence, read N- to C-terminus: Nicotinate-nucleotide--dimethylbenzimidazole phosphoribosyltransferase (336 aa).

Positions 20 to 41 (GPDAAARAGAEERNGQLTKPPG) are disordered. E304 serves as the catalytic Proton acceptor.

Belongs to the CobT family.

The enzyme catalyses 5,6-dimethylbenzimidazole + nicotinate beta-D-ribonucleotide = alpha-ribazole 5'-phosphate + nicotinate + H(+). The protein operates within nucleoside biosynthesis; alpha-ribazole biosynthesis; alpha-ribazole from 5,6-dimethylbenzimidazole: step 1/2. Its function is as follows. Catalyzes the synthesis of alpha-ribazole-5'-phosphate from nicotinate mononucleotide (NAMN) and 5,6-dimethylbenzimidazole (DMB). In Ruegeria pomeroyi (strain ATCC 700808 / DSM 15171 / DSS-3) (Silicibacter pomeroyi), this protein is Nicotinate-nucleotide--dimethylbenzimidazole phosphoribosyltransferase.